Here is a 318-residue protein sequence, read N- to C-terminus: MYLINLLAMIIPVLLAVAFLTLLERKVLGYMQLRKGPNIVGPYGLLQPIADAVKLFTKEPLQPLTSSPMLFIIAPTLALTLALTMWTPLPMPYPLMNMNLSMLFILALSSLAVYTIMWSGWASNSKYALIGALRAVAQTISYEVTLAIIILSLLLMNGSFTLLSMTTTQEYIWLLIPSWPLAMMWFISTLAETNRAPFDLTEGESELVSGFNVEYAGGPFALFFLAEYANIIMMNALTIILFLGAYHNPMVPELYTINFTTKTLLFTAFFLWIRASYPRFRYDQLMHLLWKNFLPLTLVMCMWHVALPIMLAGIPPQT.

8 consecutive transmembrane segments (helical) span residues 3-23 (LINL…LTLL), 69-89 (MLFI…WTPL), 102-122 (MLFI…SGWA), 144-164 (VTLA…TLLS), 171-191 (YIWL…STLA), 222-242 (LFFL…IILF), 253-273 (ELYT…FLWI), and 294-314 (LPLT…LAGI).

This sequence belongs to the complex I subunit 1 family. In terms of assembly, core subunit of respiratory chain NADH dehydrogenase (Complex I) which is composed of 45 different subunits.

It is found in the mitochondrion inner membrane. The catalysed reaction is a ubiquinone + NADH + 5 H(+)(in) = a ubiquinol + NAD(+) + 4 H(+)(out). Functionally, core subunit of the mitochondrial membrane respiratory chain NADH dehydrogenase (Complex I) which catalyzes electron transfer from NADH through the respiratory chain, using ubiquinone as an electron acceptor. Essential for the catalytic activity and assembly of complex I. The protein is NADH-ubiquinone oxidoreductase chain 1 (MT-ND1) of Murina florium (Flores tube-nosed bat).